We begin with the raw amino-acid sequence, 283 residues long: Pantothenate synthetase (283 aa).

An ATP-binding site is contributed by 30 to 37 (MGALHEGH). Catalysis depends on His-37, which acts as the Proton donor. Gln-61 contributes to the (R)-pantoate binding site. Residue Gln-61 participates in beta-alanine binding. 147-150 (GEKD) contributes to the ATP binding site. Gln-153 is a binding site for (R)-pantoate. Residues Val-176 and 184 to 187 (VSSR) contribute to the ATP site.

Belongs to the pantothenate synthetase family. As to quaternary structure, homodimer.

The protein localises to the cytoplasm. The catalysed reaction is (R)-pantoate + beta-alanine + ATP = (R)-pantothenate + AMP + diphosphate + H(+). Its pathway is cofactor biosynthesis; (R)-pantothenate biosynthesis; (R)-pantothenate from (R)-pantoate and beta-alanine: step 1/1. Functionally, catalyzes the condensation of pantoate with beta-alanine in an ATP-dependent reaction via a pantoyl-adenylate intermediate. The polypeptide is Pantothenate synthetase (Chlorobium limicola (strain DSM 245 / NBRC 103803 / 6330)).